Here is a 428-residue protein sequence, read N- to C-terminus: Glutamate-1-semialdehyde 2,1-aminomutase (428 aa).

Lys265 carries the post-translational modification N6-(pyridoxal phosphate)lysine.

The protein belongs to the class-III pyridoxal-phosphate-dependent aminotransferase family. HemL subfamily. In terms of assembly, homodimer. It depends on pyridoxal 5'-phosphate as a cofactor.

It is found in the cytoplasm. The catalysed reaction is (S)-4-amino-5-oxopentanoate = 5-aminolevulinate. It participates in porphyrin-containing compound metabolism; protoporphyrin-IX biosynthesis; 5-aminolevulinate from L-glutamyl-tRNA(Glu): step 2/2. The polypeptide is Glutamate-1-semialdehyde 2,1-aminomutase (Proteus mirabilis (strain HI4320)).